The sequence spans 87 residues: MGQIQYSEKYFDDTFEYRHVVLPPEVAKLLPKNRLLSENEWRAIGVQQSRGWVHYAVHRPEPHIMLFRRPLNYQQQQENQAQNMLVK.

This sequence belongs to the CKS family. In terms of assembly, interacts with CDKA-1. Interacts with CDKB1-1, CDKB1-2 and CDKB2-1. Interacts with CYCD2-1 and At4g14310.

Associates with cyclin-dependent kinases (CDKs) and plays an essential role in the regulation of the cell cycle that affects plant growth rate. May inhibit both the G1/S and G2/M phases. This is Cyclin-dependent kinases regulatory subunit 1 (CKS1) from Arabidopsis thaliana (Mouse-ear cress).